The primary structure comprises 293 residues: 4-hydroxy-tetrahydrodipicolinate synthase (293 aa).

Threonine 45 is a pyruvate binding site. Tyrosine 133 acts as the Proton donor/acceptor in catalysis. Lysine 161 acts as the Schiff-base intermediate with substrate in catalysis. Residue valine 203 coordinates pyruvate.

It belongs to the DapA family. In terms of assembly, homotetramer; dimer of dimers.

It localises to the cytoplasm. The enzyme catalyses L-aspartate 4-semialdehyde + pyruvate = (2S,4S)-4-hydroxy-2,3,4,5-tetrahydrodipicolinate + H2O + H(+). It participates in amino-acid biosynthesis; L-lysine biosynthesis via DAP pathway; (S)-tetrahydrodipicolinate from L-aspartate: step 3/4. In terms of biological role, catalyzes the condensation of (S)-aspartate-beta-semialdehyde [(S)-ASA] and pyruvate to 4-hydroxy-tetrahydrodipicolinate (HTPA). In Exiguobacterium sp. (strain ATCC BAA-1283 / AT1b), this protein is 4-hydroxy-tetrahydrodipicolinate synthase.